Reading from the N-terminus, the 348-residue chain is NADH-ubiquinone oxidoreductase chain 2 (348 aa).

10 consecutive transmembrane segments (helical) span residues 1 to 21 (MSPY…TITF), 25 to 45 (SWLM…PLMV), 60 to 80 (FLTQ…NAWM), 93 to 115 (LSAP…HFWL), 149 to 169 (LNTT…GLGG), 177 to 197 (KVLA…IQYS), 200 to 220 (LALL…LTLM), 239 to 259 (IATM…PLTG), 274 to 294 (NLPA…FFYL), and 326 to 346 (LAML…MVAI).

It belongs to the complex I subunit 2 family.

Its subcellular location is the mitochondrion inner membrane. The catalysed reaction is a ubiquinone + NADH + 5 H(+)(in) = a ubiquinol + NAD(+) + 4 H(+)(out). Core subunit of the mitochondrial membrane respiratory chain NADH dehydrogenase (Complex I) that is believed to belong to the minimal assembly required for catalysis. Complex I functions in the transfer of electrons from NADH to the respiratory chain. The immediate electron acceptor for the enzyme is believed to be ubiquinone. In Latimeria chalumnae (Coelacanth), this protein is NADH-ubiquinone oxidoreductase chain 2 (MT-ND2).